Here is a 368-residue protein sequence, read N- to C-terminus: Glutaminyl-peptide cyclotransferase (368 aa).

The signal sequence occupies residues Met-1–Ala-23. The N-linked (GlcNAc...) asparagine glycan is linked to Asn-53. A disulfide bond links Cys-143 and Cys-169. Asp-164 contacts Zn(2+). Catalysis depends on Glu-207, which acts as the Proton acceptor. Glu-208 lines the Zn(2+) pocket. Residue Asp-254 is the Proton acceptor of the active site. N-linked (GlcNAc...) asparagine glycosylation occurs at Asn-292. Residue His-336 participates in Zn(2+) binding. N-linked (GlcNAc...) asparagine glycosylation is present at Asn-352.

It belongs to the glutaminyl-peptide cyclotransferase family. As to expression, expressed by the venom gland.

The protein resides in the secreted. It catalyses the reaction N-terminal L-glutaminyl-[peptide] = N-terminal 5-oxo-L-prolyl-[peptide] + NH4(+). In terms of biological role, responsible for the biosynthesis of pyroglutamyl peptides. Has a bias against acidic and tryptophan residues adjacent to the N-terminal glutaminyl residue and a lack of importance of chain length after the second residue. Also catalyzes N-terminal pyroglutamate formation. The chain is Glutaminyl-peptide cyclotransferase (QPCT) from Boiga irregularis (Brown tree snake).